The chain runs to 377 residues: tRNA(Met) cytidine acetate ligase (377 aa).

Residues 7–20 (VVEYNPFHNGHRYH), glycine 101, asparagine 151, and arginine 176 each bind ATP.

This sequence belongs to the TmcAL family.

The protein resides in the cytoplasm. The catalysed reaction is cytidine(34) in elongator tRNA(Met) + acetate + ATP = N(4)-acetylcytidine(34) in elongator tRNA(Met) + AMP + diphosphate. Catalyzes the formation of N(4)-acetylcytidine (ac(4)C) at the wobble position of elongator tRNA(Met), using acetate and ATP as substrates. First activates an acetate ion to form acetyladenylate (Ac-AMP) and then transfers the acetyl group to tRNA to form ac(4)C34. This is tRNA(Met) cytidine acetate ligase from Limosilactobacillus reuteri (strain DSM 20016) (Lactobacillus reuteri).